We begin with the raw amino-acid sequence, 112 residues long: Large ribosomal subunit protein eL33w (112 aa).

Belongs to the eukaryotic ribosomal protein eL33 family.

This chain is Large ribosomal subunit protein eL33w (RPL35AA), found in Arabidopsis thaliana (Mouse-ear cress).